A 356-amino-acid polypeptide reads, in one-letter code: Uroporphyrinogen decarboxylase (356 aa).

8 residues coordinate coproporphyrinogen I: Arg33, Ala35, Arg37, Arg46, Asp82, Tyr159, Ser214, and His334. Residues Arg33, Ala35, and Arg37 each coordinate coproporphyrinogen III. 4 residues coordinate coproporphyrinogen III: Asp82, Tyr159, Ser214, and His334.

It belongs to the uroporphyrinogen decarboxylase family. As to quaternary structure, homodimer.

It localises to the cytoplasm. Its subcellular location is the cytosol. The enzyme catalyses uroporphyrinogen III + 4 H(+) = coproporphyrinogen III + 4 CO2. It functions in the pathway porphyrin-containing compound metabolism; protoporphyrin-IX biosynthesis; coproporphyrinogen-III from 5-aminolevulinate: step 4/4. Catalyzes the decarboxylation of four acetate groups of uroporphyrinogen-III to yield coproporphyrinogen-III. This is Uroporphyrinogen decarboxylase from Drosophila melanogaster (Fruit fly).